Here is a 633-residue protein sequence, read N- to C-terminus: ATP-dependent clpX-like chaperone, mitochondrial (633 aa).

A mitochondrion-targeting transit peptide spans 1–56; it reads MSSCGACTCGAAAARLLTTSLTSAQRGISCGRIHVPVLGRLGTLDTQILRRAPLRT. Residues 65 to 101 are disordered; sequence ASKDGTNKDGSGDGNKKSVTEGSSKKSGSGNSGKGGN. A compositionally biased stretch (basic and acidic residues) spans 69–83; it reads GTNKDGSGDGNKKSV. Over residues 84-93 the composition is skewed to low complexity; it reads TEGSSKKSGS. A ClpX-type ZB domain is found at 93–146; that stretch reads SGNSGKGGNQLRCPKCGDLCTHVETFVSSTRFVKCEKCHHFFVVLSEADSKKSI. Positions 105, 108, 127, and 130 each coordinate Zn(2+). 294–301 contacts ATP; the sequence is PTGSGKTL. An N6-acetyllysine modification is found at Lys437. The segment covering 598–610 has biased composition (basic and acidic residues); sequence KEPGYIRAPSKES. The tract at residues 598-633 is disordered; sequence KEPGYIRAPSKESSEEDYDSGVEEDGWPRQADAANS. A compositionally biased stretch (acidic residues) spans 611–622; it reads SEEDYDSGVEED. Ser617 bears the Phosphoserine mark.

Belongs to the ClpX chaperone family. As to quaternary structure, homohexamer that forms a ring structure; this hexamerization requires ATP binding. Component of the ClpXP complex formed by the assembly of two CLPP heptameric rings with two CLPX hexameric rings, giving rise to a symmetrical structure with two central CLPP rings flanked by a CLPX ring at either end of the complex. Interacts with TFAM.

It localises to the mitochondrion. It is found in the mitochondrion matrix. Its subcellular location is the mitochondrion nucleoid. It carries out the reaction ATP + H2O = ADP + phosphate + H(+). ATP-dependent chaperone that functions as an unfoldase. As part of the ClpXP protease complex, it recognizes specific protein substrates, unfolds them using energy derived from ATP hydrolysis, and then translocates them to the proteolytic subunit (CLPP) of the ClpXP complex for degradation. Thanks to its chaperone activity, it also functions in the incorporation of the pyridoxal phosphate cofactor into 5-aminolevulinate synthase, thereby activating 5-aminolevulinate (ALA) synthesis, the first step in heme biosynthesis. This chaperone is also involved in the control of mtDNA nucleoid distribution, by regulating mitochondrial transcription factor A (TFAM) activity. The chain is ATP-dependent clpX-like chaperone, mitochondrial from Rattus norvegicus (Rat).